Here is a 275-residue protein sequence, read N- to C-terminus: MITAGLAGYVQRFASLFIRPALSIAEWLRLLQVLFPEVQRRYAEAADLGRDFYDSQRRLHHPELPRNERLRSDLQWEWFVRNMEPARKGLSQADSPQAAVTKLTLATVREVEMAGRRQIIGAVKNDPAPKIVKGWARVATGRETCAWCLMLISRGPEYLSADSGGLHLDTETVVDLWNEAGRDLEKFREETKPHIEEWHAGCDCLVVPVFDVENWPGKAAQERALQLWIDAGKEASQLIASGKARSKNENKETINALRRRLYRGEFAMSDYALAA.

This is Gene 15 protein (15) from Mycobacterium phage D29 (Mycobacteriophage D29).